A 265-amino-acid polypeptide reads, in one-letter code: Anamorsin homolog 1 (265 aa).

The N-terminal SAM-like domain stretch occupies residues 1-143 (MAATVAEALA…KVSWSLGSSF (143 aa)). Residues 144–175 (PLKKATKGLPKIQIDDDSELIDEDSLLTEDDL) are linker. [2Fe-2S] cluster-binding residues include cysteine 186, cysteine 195, cysteine 198, and cysteine 200. Positions 186-200 (CEVGATRKACKNCTC) are fe-S binding site A. Residues cysteine 226, cysteine 229, cysteine 237, and cysteine 240 each contribute to the [4Fe-4S] cluster site. 2 short sequence motifs (cx2C motif) span residues 226 to 229 (CGNC) and 237 to 240 (CGTC). Residues 226–240 (CGNCGLGDAFRCGTC) are fe-S binding site B.

This sequence belongs to the anamorsin family. In terms of assembly, monomer. Requires [2Fe-2S] cluster as cofactor. [4Fe-4S] cluster is required as a cofactor.

It is found in the cytoplasm. The protein localises to the mitochondrion intermembrane space. In terms of biological role, component of the cytosolic iron-sulfur (Fe-S) protein assembly (CIA) machinery. Required for the maturation of extramitochondrial Fe-S proteins. Part of an electron transfer chain functioning in an early step of cytosolic Fe-S biogenesis, facilitating the de novo assembly of a [4Fe-4S] cluster on the cytosolic Fe-S scaffold complex. Electrons are transferred from NADPH via a FAD- and FMN-containing diflavin oxidoreductase. Together with the diflavin oxidoreductase, also required for the assembly of the diferric tyrosyl radical cofactor of ribonucleotide reductase (RNR), probably by providing electrons for reduction during radical cofactor maturation in the catalytic small subunit. The protein is Anamorsin homolog 1 of Oryza sativa subsp. japonica (Rice).